Reading from the N-terminus, the 285-residue chain is Chromatin modification-related protein YNG2 (285 aa).

Positions 19–54 (LEVKHLLQELKNKDVQLQEARKRYQTKDNQIHKFIR) form a coiled coil. Positions 138-165 (NGLSDNLSGTTTPRGHSASTPVADNAAN) are enriched in polar residues. Residues 138-218 (NGLSDNLSGT…SRPNEGPGNN (81 aa)) are disordered. Positions 193-207 (MKSEDFEDKKYDNDS) are enriched in basic and acidic residues. A PHD-type zinc finger spans residues 225-276 (NLYCFCQRVSFGEMIGCDNDDCKFEWFHWSCVGITAPPKDDEIWYCPDCAPK). Residues Cys228, Cys230, Cys241, Cys246, His252, Cys255, Cys270, and Cys273 each contribute to the Zn(2+) site.

Belongs to the ING family. As to quaternary structure, interacts with H3K4me3 and to a lesser extent with H3K4me2. Component of the NuA4 histone acetyltransferase complex.

Its subcellular location is the nucleus. Its function is as follows. Component of the NuA4 histone acetyltransferase complex which is involved in transcriptional activation of selected genes principally by acetylation of nucleosomal histone H4 and H2A. The NuA4 complex is also involved in DNA repair. Involved in cell cycle progression and meiosis. The chain is Chromatin modification-related protein YNG2 (YNG2) from Debaryomyces hansenii (strain ATCC 36239 / CBS 767 / BCRC 21394 / JCM 1990 / NBRC 0083 / IGC 2968) (Yeast).